The primary structure comprises 538 residues: Probable inorganic phosphate transporter 1-4 (538 aa).

Topologically, residues 1–23 are cytoplasmic; that stretch reads MAGELKVLNALDSAKTQWYHFTA. The helical transmembrane segment at 24–44 threads the bilayer; sequence IVIAGMGFFTDAYDLFSISLV. At 45–69 the chain is on the extracellular side; the sequence is TKLLGRIYYFNPASKSPGSLPPNVS. A helical transmembrane segment spans residues 70–90; it reads AAVNGVAFCGTLAGQLFFGWL. Over 91–98 the chain is Cytoplasmic; it reads GDKMGRKK. Residues 99 to 119 form a helical membrane-spanning segment; it reads VYGMTLMLMVICCLASGLSFG. At 120–123 the chain is on the extracellular side; the sequence is SSAK. The chain crosses the membrane as a helical span at residues 124–144; the sequence is GVMATLCFFRFWLGFGIGGDY. Topologically, residues 145–163 are cytoplasmic; the sequence is PLSATIMSEYANKRTRGAF. The chain crosses the membrane as a helical span at residues 164-184; it reads IAAVFAMQGFGNLTGGIVAII. Over 185 to 210 the chain is Extracellular; it reads VSAAFKSRFDAPAYRDDRTGSTVPQA. A helical transmembrane segment spans residues 211–231; that stretch reads DYAWRIVLMFGAIPALLTYYW. The Cytoplasmic portion of the chain corresponds to 232–294; sequence RMKMPETARY…RQFLRRHGRH (63 aa). A helical transmembrane segment spans residues 295–315; sequence LLGTTVCWFVLDIAFYSSNLF. Over 316 to 346 the chain is Extracellular; it reads QKDIYTAVQWLPKADTMSALEEMFKISRAQT. The chain crosses the membrane as a helical span at residues 347–367; that stretch reads LVALCGTIPGYWFTVFFIDII. The Cytoplasmic segment spans residues 368–369; sequence GR. A helical transmembrane segment spans residues 370–390; the sequence is FVIQLGGFFFMTAFMLGLAVP. Residues 391–396 are Extracellular-facing; the sequence is YHHWTT. A helical membrane pass occupies residues 397–417; it reads PGNHIGFVVMYAFTFFFANFG. Over 418–440 the chain is Cytoplasmic; sequence PNSTTFIVPAEIFPARLRSTCHG. A helical transmembrane segment spans residues 441–461; sequence ISAAAGKAGAIVGSFGFLYAA. Residues 462–481 lie on the Extracellular side of the membrane; the sequence is QSTDASKTDAGYPPGIGVRN. Residues 482-502 traverse the membrane as a helical segment; sequence SLFFLAGCNVIGFFFTFLVPE. Topologically, residues 503–538 are cytoplasmic; that stretch reads SKGKSLEELSGENEDDDDVPEAPATADHRTAPAPPA. Positions 507–538 are disordered; it reads SLEELSGENEDDDDVPEAPATADHRTAPAPPA. Acidic residues predominate over residues 511 to 522; sequence LSGENEDDDDVP.

Belongs to the major facilitator superfamily. Phosphate:H(+) symporter (TC 2.A.1.9) family. Expressed at low levels in roots.

It is found in the membrane. High-affinity transporter for external inorganic phosphate. The chain is Probable inorganic phosphate transporter 1-4 (PHT1-4) from Oryza sativa subsp. japonica (Rice).